We begin with the raw amino-acid sequence, 306 residues long: Pantothenate kinase (306 aa).

90 to 97 lines the ATP pocket; that stretch reads GSVAVGKS.

It belongs to the prokaryotic pantothenate kinase family.

It is found in the cytoplasm. It carries out the reaction (R)-pantothenate + ATP = (R)-4'-phosphopantothenate + ADP + H(+). The protein operates within cofactor biosynthesis; coenzyme A biosynthesis; CoA from (R)-pantothenate: step 1/5. This Lactococcus lactis subsp. lactis (strain IL1403) (Streptococcus lactis) protein is Pantothenate kinase (coaA).